A 912-amino-acid polypeptide reads, in one-letter code: WD repeat-containing protein 44 (912 aa).

Acidic residues predominate over residues 1-14 (MASESDTEEFFDAP). The interval 1–25 (MASESDTEEFFDAPEDVHLEGGDPI) is disordered. Residue A2 is modified to N-acetylalanine. Positions 2–170 (ASESDTEEFF…SSTAQLNVPE (169 aa)) are binding activity. Residue S3 is modified to Phosphoserine. Positions 9-15 (EFFDAPE) match the FFAT-like motif motif. A phosphoserine mark is found at S50, S66, S71, S81, S96, and S126. 2 disordered regions span residues 79–104 (DDSL…GTEL) and 118–152 (QEDS…KPVD). Residues 89-104 (QSDQATASPVTAGTEL) show a composition bias toward polar residues. At T158 the chain carries Phosphothreonine. Disordered regions lie at residues 183–202 (VKES…TKDF), 207–279 (EVAP…PKEN), 318–349 (QENG…ELTD), 396–422 (SNDA…RLKQ), and 457–479 (RDEV…MPYT). The interval 210 to 256 (PAKPPRQLTPEPDIVASTKKPVPARPPPPANFPPPRPPPPSRPAPPP) is important for interaction with ARHGAP26 AND ARHGAP10. A Phosphothreonine modification is found at T218. Over residues 232–255 (PARPPPPANFPPPRPPPPSRPAPP) the composition is skewed to pro residues. The residue at position 261 (S261) is a Phosphoserine. Residues 261–277 (SELEFEALKTPDLDVPK) are compositionally biased toward basic and acidic residues. T270 is subject to Phosphothreonine. Residues 333 to 346 (VMGPQRPRSNSGRE) form an important for interaction with RAB11A region. Residues 334 to 504 (MGPQRPRSNS…DFDQIKVVQD (171 aa)) form an interaction with RAB11 region. 2 positions are modified to phosphoserine: S341 and S343. Phosphothreonine is present on T348. 4 positions are modified to phosphoserine: S402, S469, S470, and S471. Acidic residues predominate over residues 466 to 475 (DDPSSSDDEG). Y478 is modified (phosphotyrosine). Residues 508–547 (EHMGAVWTMKFSHCGRLLASAGQDNVVRIWALKNAFDYFN) form a WD 1 repeat. Positions 556–592 (EGRVSPSPSQESLNSSKSDTDTGVCSGTDEDPDDKNA) are disordered. 2 positions are modified to phosphoserine: S560 and S564. Residues 560–572 (SPSPSQESLNSSK) show a composition bias toward low complexity. WD repeat units lie at residues 604-642 (GHTA…CLCC), 644-684 (QHID…VALW), 689-728 (GQTK…YHTQ), 739-778 (KVGR…LSMK), 783-822 (VNSS…SKFT), and 871-912 (EDAE…KNLS).

In terms of assembly, interacts with the GTP-bound form of RAB11A when membrane-associated. Interacts with GRAF1/ARHGAP26 or GRAF2/ARHGAP10; the interaction connects the endoplasmic reticulum (ER) with the endosomal tubule. Interacts (via FFAT-like motif) with VAPA (via MSP domain) or VAPB (via MSP domain); the interaction connects the ER with the endosomal tubule. Does not bind to other Rab and Rho small G proteins. Phosphorylated by ATK1; the phosphorylation stabilizes its interaction with RAB11A and RAB11B. As to expression, highly expressed in brain.

The protein resides in the cytoplasm. It localises to the cytosol. It is found in the perinuclear region. The protein localises to the endosome membrane. Its subcellular location is the golgi apparatus. The protein resides in the trans-Golgi network. Functionally, downstream effector for Rab11 which regulates Rab11 intracellular membrane trafficking functions such as endocytic recycling, intracellular ciliogenesis and protein export. ATK1-mediated phosphorylation of WDR44 induces binding to Rab11 which activates endocytic recycling of transferrin receptor back to the plasma membrane. When bound to Rab11, prevents the formation of the ciliogenic Rab11-Rabin8/RAB3IP-RAB11FIP3 complex, therefore inhibiting preciliary trafficking and ciliogenesis. Participates in neo-synthesized protein export by connecting the endoplasmic reticulum (ER) with the endosomal tubule via direct interactions with the integral ER proteins VAPA or VAPB and the endosomal protein GRAFs (GRAF1/ARHGAP26 or GRAF2/ARHGAP10), which facilitates the transfer of proteins such as E-cadherin, MPP14 and CFTR into a Rab8-Rab10-Rab11-dependent export route. In Bos taurus (Bovine), this protein is WD repeat-containing protein 44 (WDR44).